Consider the following 340-residue polypeptide: tRNA N6-adenosine threonylcarbamoyltransferase (340 aa).

Histidine 115 and histidine 119 together coordinate Fe cation. Substrate-binding positions include 138-142 (VVSGG), aspartate 171, glycine 184, aspartate 188, and asparagine 278. Aspartate 306 contacts Fe cation.

It belongs to the KAE1 / TsaD family. The cofactor is Fe(2+).

The protein localises to the cytoplasm. The enzyme catalyses L-threonylcarbamoyladenylate + adenosine(37) in tRNA = N(6)-L-threonylcarbamoyladenosine(37) in tRNA + AMP + H(+). Its function is as follows. Required for the formation of a threonylcarbamoyl group on adenosine at position 37 (t(6)A37) in tRNAs that read codons beginning with adenine. Is involved in the transfer of the threonylcarbamoyl moiety of threonylcarbamoyl-AMP (TC-AMP) to the N6 group of A37, together with TsaE and TsaB. TsaD likely plays a direct catalytic role in this reaction. This chain is tRNA N6-adenosine threonylcarbamoyltransferase, found in Clostridium botulinum (strain 657 / Type Ba4).